The sequence spans 741 residues: MQAKKRYLISLLTGAFLVLLIYLGGGGVPGPAAPGSRSRTHGYNRPDQPWPHFSDPLQHFSPWDHSDTEDYNVHISPRQKRDVNSSVYKGKRCRMQSCFDFSLCQRNGFKVYVYPQQKGEKISESYQNILSTIEGSRFYTSDPGQACVFVLSLDTLDRDQLSPQYVHNLKTKVQSLALWNNGRNHLIFNLYSGTWPDYTEDLGFDIGQAMLAKASISTENFRPNFDISIPLFSKEHPRTGGDRGYLKYNTIPPFRKYMLVFKGKRYLTGIGSDTRNALYHVHNAEDVVLLTTCKHGKDWQKHKDARCDKDNAEYDKYDYREMLHNSTFCLVPRGRRLGSFRFLEALQAACVPVMLSNGWELPFSEVIDWNTAAVIGDERLLLQIPSTVRSIHQDKILALRQQTQFLWEAYFSSVEKIVLTTLEIIQDRVLQQSSRSSVMWNSHPGGLFSLPQYSSYLGDLPFFYAKLGIKPSPKFTAVIHAVTPLVSQSQPILKLIVSVARSQYCAQIIVLWNCDKPLPAKQRWPATAVPIIVIEGENKVMSSRFQPYESLISDAVLSLDEDTVLSTTEVDFAFTVWQSFPERIVGYPARSHFWDNNKERWGYTSKWTNDYSMVLTGAAIYHRYYHFLYTHFLPSSLKSMVDQLANCEDILMNFLVSAVTKLPPVKVTQKKQYKETMMGQSSRASRWADPDHFAQRQTCMNKFASWFGGMPLVHSQMRLDPVLFKDQVSILRKKYREIERL.

Topologically, residues M1–Y7 are cytoplasmic. The helical; Signal-anchor for type II membrane protein transmembrane segment at L8–V28 threads the bilayer. The Lumenal segment spans residues P29–L741. 2 N-linked (GlcNAc...) asparagine glycosylation sites follow: N84 and N325. Positions 435, 544, 560, 561, 562, 648, 649, and 696 each coordinate UDP-N-acetyl-alpha-D-glucosamine. D562 lines the Mn(2+) pocket. An intrachain disulfide couples C647 to C699. D649 is an active-site residue.

It belongs to the glycosyltransferase 47 family. Requires Mn(2+) as cofactor.

The protein resides in the endoplasmic reticulum membrane. The enzyme catalyses 3-O-{[(1-&gt;4)-beta-D-GlcA-(1-&gt;4)-alpha-D-GlcNAc](n)-(1-&gt;4)-beta-D-GlcA-(1-&gt;3)-beta-D-Gal-(1-&gt;3)-beta-D-Gal-(1-&gt;4)-beta-D-Xyl}-L-seryl-[protein] + UDP-N-acetyl-alpha-D-glucosamine = 3-O-{alpha-D-GlcNAc-[(1-&gt;4)-beta-D-GlcA-(1-&gt;4)-alpha-D-GlcNAc](n)-(1-&gt;4)-beta-D-GlcA-(1-&gt;3)-beta-D-Gal-(1-&gt;3)-beta-D-Gal-(1-&gt;4)-beta-D-Xyl}-L-seryl-[protein] + UDP + H(+). The catalysed reaction is 3-O-{alpha-D-GlcNAc-[(1-&gt;4)-beta-D-GlcA-(1-&gt;4)-alpha-D-GlcNAc](n)-(1-&gt;4)-beta-D-GlcA-(1-&gt;3)-beta-D-Gal-(1-&gt;3)-beta-D-Gal-(1-&gt;4)-beta-D-Xyl}-L-seryl-[protein] + UDP-alpha-D-glucuronate = 3-O-{[(1-&gt;4)-beta-D-GlcA-(1-&gt;4)-alpha-D-GlcNAc](n+1)-(1-&gt;4)-beta-D-GlcA-(1-&gt;3)-beta-D-Gal-(1-&gt;3)-beta-D-Gal-(1-&gt;4)-beta-D-Xyl}-L-seryl-[protein] + UDP + H(+). It participates in protein modification; protein glycosylation. In terms of biological role, glycosyltransferase required for the biosynthesis of heparan-sulfate. This Danio rerio (Zebrafish) protein is Exostosin-1b (ext1b).